The following is a 117-amino-acid chain: Large ribosomal subunit protein uL18 (117 aa).

The protein belongs to the universal ribosomal protein uL18 family. In terms of assembly, part of the 50S ribosomal subunit; part of the 5S rRNA/L5/L18/L25 subcomplex. Contacts the 5S and 23S rRNAs.

Functionally, this is one of the proteins that bind and probably mediate the attachment of the 5S RNA into the large ribosomal subunit, where it forms part of the central protuberance. In Laribacter hongkongensis (strain HLHK9), this protein is Large ribosomal subunit protein uL18.